The sequence spans 329 residues: GTPase Obg (329 aa).

The 159-residue stretch at 2-160 folds into the Obg domain; sequence YNFKDSVSIT…LNVRLELFLV (159 aa). One can recognise an OBG-type G domain in the interval 161 to 327; that stretch reads ADIGLVGPPN…LIKEFFILAK (167 aa). GTP is bound by residues 167-174, 192-196, 213-216, 280-283, and 308-310; these read GPPNAGKS, FTTKI, DIPG, NKLD, and SIY. The Mg(2+) site is built by serine 174 and threonine 194.

Belongs to the TRAFAC class OBG-HflX-like GTPase superfamily. OBG GTPase family. In terms of assembly, monomer. Mg(2+) serves as cofactor.

Its subcellular location is the cytoplasm. In terms of biological role, an essential GTPase which binds GTP, GDP and possibly (p)ppGpp with moderate affinity, with high nucleotide exchange rates and a fairly low GTP hydrolysis rate. Plays a role in control of the cell cycle, stress response, ribosome biogenesis and in those bacteria that undergo differentiation, in morphogenesis control. The chain is GTPase Obg from Borrelia garinii subsp. bavariensis (strain ATCC BAA-2496 / DSM 23469 / PBi) (Borreliella bavariensis).